A 488-amino-acid chain; its full sequence is Ribosomal RNA small subunit methyltransferase F (488 aa).

Residues 135-141, Glu159, Asp186, and Asp204 contribute to the S-adenosyl-L-methionine site; that span reads ASAPGSK. The Nucleophile role is filled by Cys257.

It belongs to the class I-like SAM-binding methyltransferase superfamily. RsmB/NOP family.

It is found in the cytoplasm. The enzyme catalyses cytidine(1407) in 16S rRNA + S-adenosyl-L-methionine = 5-methylcytidine(1407) in 16S rRNA + S-adenosyl-L-homocysteine + H(+). Functionally, specifically methylates the cytosine at position 1407 (m5C1407) of 16S rRNA. The chain is Ribosomal RNA small subunit methyltransferase F from Shewanella pealeana (strain ATCC 700345 / ANG-SQ1).